The following is a 118-amino-acid chain: Protein BEX4 (118 aa).

Positions 14–50 (VEKDKKNKKGGKASKQSEEESHHLEEVENKKPGGNVR) are disordered. Positions 28-44 (KQSEEESHHLEEVENKK) are enriched in basic and acidic residues. Residues 30-88 (SEEESHHLEEVENKKPGGNVRRKVRRLVPNFLWAIPNRHVDHSEGGEEVGRFVGQVMEA) are interaction with SIRT2. The tract at residues 30–118 (SEEESHHLEE…DNHYDFCLIP (89 aa)) is interaction with alpha-tubulin. Residue C115 participates in Zn(2+) binding.

The protein belongs to the BEX family. In terms of assembly, interacts with alpha-tubulin. Interacts with SIRT2. In terms of processing, ubiquitinated and degraded by the proteasome.

It is found in the cytoplasm. The protein resides in the cytoskeleton. It localises to the spindle pole. Its subcellular location is the nucleus. Its function is as follows. May play a role in microtubule deacetylation by negatively regulating the SIRT2 deacetylase activity toward alpha-tubulin and thereby participate in the control of cell cycle progression and genomic stability. In absence of reductive stress, acts as a pseudosubstrate for the CRL2(FEM1B) complex: associates with FEM1B via zinc, thereby preventing association between FEM1B and its substrates. The polypeptide is Protein BEX4 (Rattus norvegicus (Rat)).